The following is a 463-amino-acid chain: MSENNCSKPSFPDNAASKEYAASLDAADPLASFRDQFIIPSKANIACKRLAKPNLSPEPCIYFCGNSLGIQPKATAKYLEAQLDTWSSIGVCGHFTNLEDSPMKSWQLLAEQAAESMSKIVGADPAEVAAMGTLTANLHLLMASFYKPTATKHKILMDWKAFPSDHYAIESHIAWHNLDPKESMVLIGPDEGEYEISTDKILSYIDQHAEDAALLLLPGIQYYTGQLFDIPKITEYAKSRNLVVGWDLAHAYGNVELKLHDWNVDFAAWCTYKYGNAGPGAMAGLFVHDKHGQVDYSQGEDSPKFRHRLTGWYGGDRSVRFKMDNKFKPIPGAGGFQISNPSAIDLSCLCAALSVFDQTSVSELRRKSLKLTAYLEYLLLKDTTEDSRPFRIITPTNPEARGAQLSLLLKPGLLQGVSERLQDAGIICDKREPGVVRVAPVPLYNTYSEVWEFVQQFRAALQL.

Residues Leu-134, Thr-135, 162-165, Asp-247, His-250, and Tyr-272 contribute to the pyridoxal 5'-phosphate site; that span reads FPSD. Lys-273 is modified (N6-(pyridoxal phosphate)lysine). Positions 312 and 340 each coordinate pyridoxal 5'-phosphate.

This sequence belongs to the kynureninase family. In terms of assembly, homodimer. Pyridoxal 5'-phosphate serves as cofactor.

It localises to the cytoplasm. It catalyses the reaction L-kynurenine + H2O = anthranilate + L-alanine + H(+). It carries out the reaction 3-hydroxy-L-kynurenine + H2O = 3-hydroxyanthranilate + L-alanine + H(+). It participates in amino-acid degradation; L-kynurenine degradation; L-alanine and anthranilate from L-kynurenine: step 1/1. The protein operates within cofactor biosynthesis; NAD(+) biosynthesis; quinolinate from L-kynurenine: step 2/3. Functionally, catalyzes the cleavage of L-kynurenine (L-Kyn) and L-3-hydroxykynurenine (L-3OHKyn) into anthranilic acid (AA) and 3-hydroxyanthranilic acid (3-OHAA), respectively. The chain is Kynureninase 2 (bna5-2) from Aspergillus terreus (strain NIH 2624 / FGSC A1156).